The sequence spans 292 residues: Acetyl-coenzyme A carboxylase carboxyl transferase subunit beta (292 aa).

In terms of domain architecture, CoA carboxyltransferase N-terminal spans 29-292 (LWSKCPECGQ…HGCESRVASS (264 aa)). Zn(2+) is bound by residues cysteine 33, cysteine 36, cysteine 52, and cysteine 55. Residues 33–55 (CPECGQVVYRKDLLSNASVCGNC) form a C4-type zinc finger.

The protein belongs to the AccD/PCCB family. In terms of assembly, acetyl-CoA carboxylase is a heterohexamer composed of biotin carboxyl carrier protein (AccB), biotin carboxylase (AccC) and two subunits each of ACCase subunit alpha (AccA) and ACCase subunit beta (AccD). The cofactor is Zn(2+).

Its subcellular location is the cytoplasm. The enzyme catalyses N(6)-carboxybiotinyl-L-lysyl-[protein] + acetyl-CoA = N(6)-biotinyl-L-lysyl-[protein] + malonyl-CoA. The protein operates within lipid metabolism; malonyl-CoA biosynthesis; malonyl-CoA from acetyl-CoA: step 1/1. In terms of biological role, component of the acetyl coenzyme A carboxylase (ACC) complex. Biotin carboxylase (BC) catalyzes the carboxylation of biotin on its carrier protein (BCCP) and then the CO(2) group is transferred by the transcarboxylase to acetyl-CoA to form malonyl-CoA. This Synechococcus sp. (strain CC9311) protein is Acetyl-coenzyme A carboxylase carboxyl transferase subunit beta.